A 76-amino-acid chain; its full sequence is Small ribosomal subunit protein bS18 (76 aa).

This sequence belongs to the bacterial ribosomal protein bS18 family. In terms of assembly, part of the 30S ribosomal subunit. Forms a tight heterodimer with protein bS6.

In terms of biological role, binds as a heterodimer with protein bS6 to the central domain of the 16S rRNA, where it helps stabilize the platform of the 30S subunit. This is Small ribosomal subunit protein bS18 from Alcanivorax borkumensis (strain ATCC 700651 / DSM 11573 / NCIMB 13689 / SK2).